A 277-amino-acid polypeptide reads, in one-letter code: Formamidopyrimidine-DNA glycosylase (277 aa).

Catalysis depends on proline 2, which acts as the Schiff-base intermediate with DNA. Glutamate 3 (proton donor) is an active-site residue. Lysine 60 functions as the Proton donor; for beta-elimination activity in the catalytic mechanism. Residues histidine 94, arginine 113, and arginine 158 each coordinate DNA. The FPG-type zinc-finger motif lies at 243–277 (WVYNRAGEPCKVCGDVIQRIKLGGRSSHFCRQCQV). Arginine 267 acts as the Proton donor; for delta-elimination activity in catalysis.

The protein belongs to the FPG family. In terms of assembly, monomer. Zn(2+) is required as a cofactor.

It carries out the reaction Hydrolysis of DNA containing ring-opened 7-methylguanine residues, releasing 2,6-diamino-4-hydroxy-5-(N-methyl)formamidopyrimidine.. It catalyses the reaction 2'-deoxyribonucleotide-(2'-deoxyribose 5'-phosphate)-2'-deoxyribonucleotide-DNA = a 3'-end 2'-deoxyribonucleotide-(2,3-dehydro-2,3-deoxyribose 5'-phosphate)-DNA + a 5'-end 5'-phospho-2'-deoxyribonucleoside-DNA + H(+). Its function is as follows. Involved in base excision repair of DNA damaged by oxidation or by mutagenic agents. Acts as a DNA glycosylase that recognizes and removes damaged bases. Has a preference for oxidized purines, such as 7,8-dihydro-8-oxoguanine (8-oxoG). Has AP (apurinic/apyrimidinic) lyase activity and introduces nicks in the DNA strand. Cleaves the DNA backbone by beta-delta elimination to generate a single-strand break at the site of the removed base with both 3'- and 5'-phosphates. This chain is Formamidopyrimidine-DNA glycosylase, found in Trichormus variabilis (strain ATCC 29413 / PCC 7937) (Anabaena variabilis).